Reading from the N-terminus, the 479-residue chain is ATP synthase subunit beta (479 aa).

ATP is bound at residue 168–175; sequence GGAGVGKT.

It belongs to the ATPase alpha/beta chains family. In terms of assembly, F-type ATPases have 2 components, CF(1) - the catalytic core - and CF(0) - the membrane proton channel. CF(1) has five subunits: alpha(3), beta(3), gamma(1), delta(1), epsilon(1). CF(0) has three main subunits: a(1), b(2) and c(9-12). The alpha and beta chains form an alternating ring which encloses part of the gamma chain. CF(1) is attached to CF(0) by a central stalk formed by the gamma and epsilon chains, while a peripheral stalk is formed by the delta and b chains.

The protein localises to the cell membrane. The catalysed reaction is ATP + H2O + 4 H(+)(in) = ADP + phosphate + 5 H(+)(out). Produces ATP from ADP in the presence of a proton gradient across the membrane. The catalytic sites are hosted primarily by the beta subunits. The polypeptide is ATP synthase subunit beta (Frankia casuarinae (strain DSM 45818 / CECT 9043 / HFP020203 / CcI3)).